A 78-amino-acid chain; its full sequence is Cytochrome c oxidase subunit 8, mitochondrial (78 aa).

A mitochondrion-targeting transit peptide spans 1–27 (MLCQQMIRTTAKRSSNIMTRPIIMKRS). Residues 28 to 51 (VHFKDGVYENIPFKVKGRKTPYAL) lie on the Mitochondrial matrix side of the membrane. Residues 52–73 (SHFGFFAIGFAVPFVACYVQLK) traverse the membrane as a helical segment. A topological domain (mitochondrial intermembrane) is located at residue Lys74. Positions 75 to 78 (SGAF) are excised as a propeptide.

Belongs to the cytochrome c oxidase VIIc family. Component of the cytochrome c oxidase (complex IV, CIV), a multisubunit enzyme composed of 12 subunits. The complex is composed of a catalytic core of 3 subunits COX1, COX2 and COX3, encoded in the mitochondrial DNA, and 9 supernumerary subunits COX4, COX5A (or COX5B), COX6, COX7, COX8, COX9, COX12, COX13 and COX26, which are encoded in the nuclear genome. The complex exists as a monomer or a dimer and forms supercomplexes (SCs) in the inner mitochondrial membrane with a dimer of ubiquinol-cytochrome c oxidoreductase (cytochrome b-c1 complex, complex III, CIII), resulting in 2 different assemblies (supercomplexes III(2)IV and III(2)IV(2)).

The protein resides in the mitochondrion inner membrane. Its pathway is energy metabolism; oxidative phosphorylation. Functionally, component of the cytochrome c oxidase, the last enzyme in the mitochondrial electron transport chain which drives oxidative phosphorylation. The respiratory chain contains 3 multisubunit complexes succinate dehydrogenase (complex II, CII), ubiquinol-cytochrome c oxidoreductase (cytochrome b-c1 complex, complex III, CIII) and cytochrome c oxidase (complex IV, CIV), that cooperate to transfer electrons derived from NADH and succinate to molecular oxygen, creating an electrochemical gradient over the inner membrane that drives transmembrane transport and the ATP synthase. Cytochrome c oxidase is the component of the respiratory chain that catalyzes the reduction of oxygen to water. Electrons originating from reduced cytochrome c in the intermembrane space (IMS) are transferred via the dinuclear copper A center (CU(A)) of COX2 and heme A of COX1 to the active site in COX1, a binuclear center (BNC) formed by heme A3 and copper B (CU(B)). The BNC reduces molecular oxygen to 2 water molecules using 4 electrons from cytochrome c in the IMS and 4 protons from the mitochondrial matrix. The protein is Cytochrome c oxidase subunit 8, mitochondrial (COX8) of Saccharomyces cerevisiae (strain ATCC 204508 / S288c) (Baker's yeast).